A 386-amino-acid polypeptide reads, in one-letter code: ADP,ATP carrier protein 1, mitochondrial (386 aa).

A mitochondrion-targeting transit peptide spans 1–76; it reads MDQVQHPSVM…PSTASAICVQ (76 aa). Solcar repeat units follow at residues 84-177, 189-281, and 289-375; these read SSFA…FKRL, KWFA…LKPV, and DSFF…LQLI. A run of 5 helical transmembrane segments spans residues 86-113, 154-178, 187-207, 257-278, and 292-312; these read FAIDFLMGGVSAAVSKTAAAPIERVKLL, TANVIRYFPTQALNFAFKDYFKRLF, YWKWFAGNLASGGAAGASSLL, FNISCVGIIVYRGLYFGMYDSL, and FASFVLGWLITNGAALASYPI. Positions 159 and 171 each coordinate ADP. Arg-316 contacts ADP. The important for transport activity stretch occupies residues 316–321; that stretch reads RRRMMM. The Nucleotide carrier signature motif motif lies at 316 to 321; it reads RRRMMM. The chain crosses the membrane as a helical span at residues 352–372; the sequence is AGSNILRAIAGAGVLAGYDKL.

The protein belongs to the mitochondrial carrier (TC 2.A.29) family. As to quaternary structure, monomer.

It localises to the mitochondrion inner membrane. It carries out the reaction ADP(in) + ATP(out) = ADP(out) + ATP(in). With respect to regulation, the matrix-open state (m-state) is inhibited by the membrane-permeable bongkrekic acid (BKA). The cytoplasmic-open state (c-state) is inhibited by the membrane-impermeable toxic inhibitor carboxyatractyloside (CATR). Functionally, ADP:ATP antiporter that mediates import of ADP into the mitochondrial matrix for ATP synthesis, and export of ATP out to fuel the cell. Cycles between the cytoplasmic-open state (c-state) and the matrix-open state (m-state): operates by the alternating access mechanism with a single substrate-binding site intermittently exposed to either the cytosolic (c-state) or matrix (m-state) side of the inner mitochondrial membrane. The protein is ADP,ATP carrier protein 1, mitochondrial (ANT1) of Gossypium hirsutum (Upland cotton).